A 74-amino-acid polypeptide reads, in one-letter code: Large ribosomal subunit protein bL31 (74 aa).

Zn(2+) contacts are provided by Cys-16, Cys-18, Cys-38, and Cys-41.

Belongs to the bacterial ribosomal protein bL31 family. Type A subfamily. Part of the 50S ribosomal subunit. The cofactor is Zn(2+).

Functionally, binds the 23S rRNA. This chain is Large ribosomal subunit protein bL31, found in Mycobacteroides abscessus (strain ATCC 19977 / DSM 44196 / CCUG 20993 / CIP 104536 / JCM 13569 / NCTC 13031 / TMC 1543 / L948) (Mycobacterium abscessus).